The following is a 244-amino-acid chain: Mono-ADP-ribosyltransferase C3 (244 aa).

Positions 1 to 40 (MKGIRKSILCLVLSAGVIAPVTTSIVQSPQKCYACTVDKG) are cleaved as a signal peptide. The 201-residue stretch at 44 to 244 (DTFTEFTNVE…QIMITAMIFK (201 aa)) folds into the TR mART core domain. NAD(+) is bound by residues threonine 80, asparagine 87, arginine 91, 128-131 (RGDD), and 167-169 (RTE). Arginine 128 is an active-site residue. Residue serine 174 is part of the active site. NAD(+) is bound by residues 182–185 (FGGR) and 211–213 (QLE). Glutamate 213 is an active-site residue.

It to exoenzymes 3 of C.limosum and C.botulinum D phage, and to S.aureus ediN. As to quaternary structure, monomer.

It is found in the secreted. It carries out the reaction L-asparaginyl-[protein] + NAD(+) = N(4)-(ADP-D-ribosyl)-L-asparaginyl-[protein] + nicotinamide + H(+). Functionally, ADP-ribosylates eukaryotic Rho and Rac proteins on an asparagine residue. This is Mono-ADP-ribosyltransferase C3 from Clostridium botulinum C phage (Clostridium botulinum C bacteriophage).